Reading from the N-terminus, the 419-residue chain is DNA polymerase IV (419 aa).

The UmuC domain occupies 12–193 (IFHIDMNCFY…MSVEEMYGIG (182 aa)). Mg(2+) contacts are provided by aspartate 16 and aspartate 112. The active site involves glutamate 113. Residues 388 to 419 (IITSQKNKNESQENQQPRTSFQKDFLDDYKKP) are disordered.

It belongs to the DNA polymerase type-Y family. As to quaternary structure, monomer. Mg(2+) serves as cofactor.

The protein resides in the cytoplasm. The enzyme catalyses DNA(n) + a 2'-deoxyribonucleoside 5'-triphosphate = DNA(n+1) + diphosphate. Functionally, poorly processive, error-prone DNA polymerase involved in untargeted mutagenesis. Copies undamaged DNA at stalled replication forks, which arise in vivo from mismatched or misaligned primer ends. These misaligned primers can be extended by PolIV. Exhibits no 3'-5' exonuclease (proofreading) activity. May be involved in translesional synthesis, in conjunction with the beta clamp from PolIII. This Oceanobacillus iheyensis (strain DSM 14371 / CIP 107618 / JCM 11309 / KCTC 3954 / HTE831) protein is DNA polymerase IV.